Reading from the N-terminus, the 123-residue chain is Small ribosomal subunit protein uS12cz/uS12cy (123 aa).

It belongs to the universal ribosomal protein uS12 family. As to quaternary structure, part of the 30S ribosomal subunit.

The protein resides in the plastid. The protein localises to the chloroplast. With S4 and S5 plays an important role in translational accuracy. Located at the interface of the 30S and 50S subunits. This chain is Small ribosomal subunit protein uS12cz/uS12cy (rps12-A), found in Citrus sinensis (Sweet orange).